The following is a 552-amino-acid chain: DNA ligase (552 aa).

Residue glutamate 229 coordinates ATP. The N6-AMP-lysine intermediate role is filled by lysine 231. Residues arginine 236 and glutamate 283 each coordinate ATP. Mg(2+) is bound by residues glutamate 283 and glutamate 377. Positions 382 and 397 each coordinate ATP.

Belongs to the ATP-dependent DNA ligase family. Interacts with host TOP2A and TOP2B. Requires Mg(2+) as cofactor.

Its subcellular location is the host cytoplasm. The enzyme catalyses ATP + (deoxyribonucleotide)n-3'-hydroxyl + 5'-phospho-(deoxyribonucleotide)m = (deoxyribonucleotide)n+m + AMP + diphosphate.. Functionally, DNA ligase that seals nicks in double-stranded DNA during DNA replication, DNA recombination and DNA repair. Recruits cellular topoisomerase II to sites of viral replication and assembly. This Vaccinia virus (strain Copenhagen) (VACV) protein is DNA ligase (OPG180).